The primary structure comprises 153 residues: Aspartate carbamoyltransferase regulatory chain (153 aa).

Zn(2+)-binding residues include Cys109, Cys114, Cys138, and Cys141.

The protein belongs to the PyrI family. As to quaternary structure, contains catalytic and regulatory chains. Zn(2+) serves as cofactor.

Functionally, involved in allosteric regulation of aspartate carbamoyltransferase. The sequence is that of Aspartate carbamoyltransferase regulatory chain from Salmonella arizonae (strain ATCC BAA-731 / CDC346-86 / RSK2980).